The chain runs to 417 residues: Glutamyl-tRNA reductase (417 aa).

Substrate-binding positions include 48–51 (TCNR), serine 100, 105–107 (EDQ), and glutamine 111. The active-site Nucleophile is cysteine 49. NADP(+) is bound at residue 180 to 185 (GAGETG).

Belongs to the glutamyl-tRNA reductase family. Homodimer.

The enzyme catalyses (S)-4-amino-5-oxopentanoate + tRNA(Glu) + NADP(+) = L-glutamyl-tRNA(Glu) + NADPH + H(+). It participates in porphyrin-containing compound metabolism; protoporphyrin-IX biosynthesis; 5-aminolevulinate from L-glutamyl-tRNA(Glu): step 1/2. Its function is as follows. Catalyzes the NADPH-dependent reduction of glutamyl-tRNA(Glu) to glutamate 1-semialdehyde (GSA). This Methanothrix thermoacetophila (strain DSM 6194 / JCM 14653 / NBRC 101360 / PT) (Methanosaeta thermophila) protein is Glutamyl-tRNA reductase.